The following is a 405-amino-acid chain: Dematin (405 aa).

4 disordered regions span residues 1 to 30, 79 to 158, 173 to 192, and 203 to 332; these read MERL…PSSI, PRSR…GSPQ, FPAA…TDYW, and TEWR…DRGN. The segment covering 11-29 has biased composition (low complexity); the sequence is SPGSVSPSRDSSVPGSPSS. A phosphoserine mark is found at Ser16, Ser18, Ser26, Ser92, Ser96, Ser105, Ser110, Ser113, and Ser156. The segment covering 108-123 has biased composition (polar residues); the sequence is IISQASAPRTTGTPRT. A compositionally biased stretch (acidic residues) spans 216 to 227; that stretch reads EEEEEEEDDDSG. Residues 224–308 are interaction with RASGRF2; that stretch reads DDSGEEMKAL…SRLQSTEFSP (85 aa). The residue at position 226 (Ser226) is a Phosphoserine. Composition is skewed to basic and acidic residues over residues 228–242 and 252–261; these read EEMK…EELS and ILKEEMEKSL. A phosphoserine mark is found at Ser269, Ser279, Ser289, Ser303, Ser315, Ser333, Ser372, and Ser383. The segment covering 276–322 has biased composition (polar residues); that stretch reads FHTSLHQGTSKSSSLPAYGRTTLSRLQSTEFSPSGSETGSPGLQNGE. One can recognise an HP domain in the interval 337-405; that stretch reads VLEQKIYPYE…NELKKKASLF (69 aa). Ser403 is subject to Phosphoserine; by PKA.

Belongs to the villin/gelsolin family. Monomeric (isoform 2); under reducing conditions. Self-associates. Exists under oxidizing condition as a trimer of two isoforms 2 and isoform 1 linked by disulfide bonds. Found in a complex with DMTN, F-actin and spectrin. Found in a complex with ADD2, DMTN and SLC2A1. Interacts with F-actin, ITPKB, RASGRF2 and spectrin. Isoform 2 interacts with SLC2A1 (via C-terminus cytoplasmic region). Isoform 1 and isoform 2 interact (phosphorylated form) with plasmodium berghei 14-3-3 protein; the interaction occurs in a PKA-dependent manner. In terms of processing, phosphorylated. Phosphorylation at Ser-403 by PKA causes the C-terminal headpiece domain to associate with the N-terminal core domain, and leads to the inhibition of its actin bundling activity. The N-terminus is blocked. Expressed in platelets (at protein level). Expressed in heart, brain, lung, skeletal muscle, and kidney.

It is found in the cytoplasm. Its subcellular location is the cytosol. It localises to the perinuclear region. The protein localises to the cytoskeleton. The protein resides in the cell membrane. It is found in the membrane. Its subcellular location is the endomembrane system. It localises to the cell projection. In terms of biological role, membrane-cytoskeleton-associated protein with F-actin-binding activity that induces F-actin bundles formation and stabilization. Its F-actin-bundling activity is reversibly regulated upon its phosphorylation by the cAMP-dependent protein kinase A (PKA). Binds to the erythrocyte membrane glucose transporter-1 SLC2A1/GLUT1, and hence stabilizes and attaches the spectrin-actin network to the erythrocytic plasma membrane. Plays a role in maintaining the functional integrity of PKA-activated erythrocyte shape and the membrane mechanical properties. Also plays a role as a modulator of actin dynamics in fibroblasts; acts as a negative regulator of the RhoA activation pathway. In platelets, functions as a regulator of internal calcium mobilization across the dense tubular system that affects platelet granule secretion pathways and aggregation. Also required for the formation of a diverse set of cell protrusions, such as filopodia and lamellipodia, necessary for platelet cell spreading, motility and migration. Acts as a tumor suppressor and inhibits malignant cell transformation. This chain is Dematin (DMTN), found in Homo sapiens (Human).